We begin with the raw amino-acid sequence, 429 residues long: Phosphoribosylamine--glycine ligase (429 aa).

An ATP-grasp domain is found at 109 to 316 (KDFLARHNIP…LVELCLAACE (208 aa)). 135–196 (LREKGAPIVI…EEFLDGEEAS (62 aa)) is a binding site for ATP. The interval 212 to 236 (SQDHKRVGDKDTGPNTGGMGAYSPA) is disordered. The span at 213–223 (QDHKRVGDKDT) shows a compositional bias: basic and acidic residues. The Mg(2+) site is built by Glu286 and Asn288.

It belongs to the GARS family. As to quaternary structure, monomer. Mg(2+) serves as cofactor. Mn(2+) is required as a cofactor.

The enzyme catalyses 5-phospho-beta-D-ribosylamine + glycine + ATP = N(1)-(5-phospho-beta-D-ribosyl)glycinamide + ADP + phosphate + H(+). The protein operates within purine metabolism; IMP biosynthesis via de novo pathway; N(1)-(5-phospho-D-ribosyl)glycinamide from 5-phospho-alpha-D-ribose 1-diphosphate: step 2/2. In Escherichia coli O6:H1 (strain CFT073 / ATCC 700928 / UPEC), this protein is Phosphoribosylamine--glycine ligase.